Reading from the N-terminus, the 423-residue chain is Lipoamide acyltransferase component of branched-chain alpha-keto acid dehydrogenase complex (423 aa).

The 76-residue stretch at 3–78 (THVIKMPDIG…AVGSELIRIE (76 aa)) folds into the Lipoyl-binding domain. At K44 the chain carries N6-lipoyllysine. A Peripheral subunit-binding (PSBD) domain is found at 137–174 (LASPAVRKRALDAGIELRYVHGSGPAGRILHEDLDAFM). Catalysis depends on residues H395 and D399.

Belongs to the 2-oxoacid dehydrogenase family. As to quaternary structure, forms a 24-polypeptide structural core with octahedral symmetry. (R)-lipoate serves as cofactor.

It carries out the reaction N(6)-[(R)-dihydrolipoyl]-L-lysyl-[protein] + 2-methylpropanoyl-CoA = N(6)-[(R)-S(8)-2-methylpropanoyldihydrolipoyl]-L-lysyl-[protein] + CoA. The branched-chain alpha-keto dehydrogenase complex catalyzes the overall conversion of alpha-keto acids to acyl-CoA and CO(2). It contains multiple copies of three enzymatic components: branched-chain alpha-keto acid decarboxylase (E1), lipoamide acyltransferase (E2) and lipoamide dehydrogenase (E3). The polypeptide is Lipoamide acyltransferase component of branched-chain alpha-keto acid dehydrogenase complex (bkdB) (Pseudomonas putida (Arthrobacter siderocapsulatus)).